A 456-amino-acid polypeptide reads, in one-letter code: Bifunctional protein GlmU (456 aa).

Residues 1–230 (MDKRFAVILA…FQETLGVNDR (230 aa)) are pyrophosphorylase. UDP-N-acetyl-alpha-D-glucosamine contacts are provided by residues 9-12 (LAAG), Lys23, Gln73, and 78-79 (GT). A Mg(2+)-binding site is contributed by Asp103. UDP-N-acetyl-alpha-D-glucosamine is bound by residues Gly140, Glu155, Asn170, and Asn228. Asn228 lines the Mg(2+) pocket. Residues 231–251 (VALSQAEMYMKERINKRHMQN) form a linker region. Residues 252–456 (GVTLIDPMNT…EDYVKNIHKK (205 aa)) form an N-acetyltransferase region. Residues Arg333 and Lys351 each coordinate UDP-N-acetyl-alpha-D-glucosamine. His363 serves as the catalytic Proton acceptor. UDP-N-acetyl-alpha-D-glucosamine contacts are provided by Tyr366 and Asn377. Acetyl-CoA contacts are provided by residues 386 to 387 (NY), Ala423, and Arg440.

The protein in the N-terminal section; belongs to the N-acetylglucosamine-1-phosphate uridyltransferase family. It in the C-terminal section; belongs to the transferase hexapeptide repeat family. In terms of assembly, homotrimer. Mg(2+) serves as cofactor.

The protein resides in the cytoplasm. It catalyses the reaction alpha-D-glucosamine 1-phosphate + acetyl-CoA = N-acetyl-alpha-D-glucosamine 1-phosphate + CoA + H(+). The enzyme catalyses N-acetyl-alpha-D-glucosamine 1-phosphate + UTP + H(+) = UDP-N-acetyl-alpha-D-glucosamine + diphosphate. It functions in the pathway nucleotide-sugar biosynthesis; UDP-N-acetyl-alpha-D-glucosamine biosynthesis; N-acetyl-alpha-D-glucosamine 1-phosphate from alpha-D-glucosamine 6-phosphate (route II): step 2/2. Its pathway is nucleotide-sugar biosynthesis; UDP-N-acetyl-alpha-D-glucosamine biosynthesis; UDP-N-acetyl-alpha-D-glucosamine from N-acetyl-alpha-D-glucosamine 1-phosphate: step 1/1. It participates in bacterial outer membrane biogenesis; LPS lipid A biosynthesis. Its function is as follows. Catalyzes the last two sequential reactions in the de novo biosynthetic pathway for UDP-N-acetylglucosamine (UDP-GlcNAc). The C-terminal domain catalyzes the transfer of acetyl group from acetyl coenzyme A to glucosamine-1-phosphate (GlcN-1-P) to produce N-acetylglucosamine-1-phosphate (GlcNAc-1-P), which is converted into UDP-GlcNAc by the transfer of uridine 5-monophosphate (from uridine 5-triphosphate), a reaction catalyzed by the N-terminal domain. The chain is Bifunctional protein GlmU from Bacillus velezensis (strain DSM 23117 / BGSC 10A6 / LMG 26770 / FZB42) (Bacillus amyloliquefaciens subsp. plantarum).